A 610-amino-acid chain; its full sequence is Pyruvate decarboxylase 1 (610 aa).

2 residues coordinate substrate: aspartate 72 and histidine 159. The thiamine pyrophosphate binding stretch occupies residues 437-519 (DSWFNCQKLR…FLINNGGYTI (83 aa)). Mg(2+) contacts are provided by aspartate 487, asparagine 514, and glycine 516. Residue glutamate 520 coordinates substrate.

This sequence belongs to the TPP enzyme family. In terms of assembly, homotetramer. The cofactor is a metal cation. Thiamine diphosphate is required as a cofactor.

It catalyses the reaction a 2-oxocarboxylate + H(+) = an aldehyde + CO2. This is Pyruvate decarboxylase 1 (PDC1) from Zea mays (Maize).